The chain runs to 209 residues: Large ribosomal subunit protein uL3 (209 aa).

The tract at residues 130 to 154 is disordered; it reads RGPMSHGSKFHRAVGSMGASSDPSR.

Belongs to the universal ribosomal protein uL3 family. In terms of assembly, part of the 50S ribosomal subunit. Forms a cluster with proteins L14 and L19.

Functionally, one of the primary rRNA binding proteins, it binds directly near the 3'-end of the 23S rRNA, where it nucleates assembly of the 50S subunit. The protein is Large ribosomal subunit protein uL3 of Clostridium kluyveri (strain NBRC 12016).